Here is a 138-residue protein sequence, read N- to C-terminus: MLGYFESILPYTNGGKLPYWLLFISVVSIFNSVQTYQNINLTKRVYEKNPNQVSPLSARTFGTWTLITSIVRFYGAYYLQNKQIYELTQFTFAIAAWHFLSEWLYFGTCKLGKGLSGPLIVSSVSLVWMYLQKDFYVN.

The helical transmembrane segment at 17–33 (LPYWLLFISVVSIFNSV) threads the bilayer. The N-linked (GlcNAc...) asparagine glycan is linked to N40. 3 helical membrane-spanning segments follow: residues 56-75 (LSAR…RFYG), 87-107 (LTQF…LYFG), and 114-131 (GLSG…WMYL).

Belongs to the ERG28 family. As to quaternary structure, heterotetramer of ERG25, ERG26, ERG27 and ERG28. ERG28 acts as a scaffold to tether ERG27 and other 4,4-demethylation-related enzymes, forming a demethylation enzyme complex, in the endoplasmic reticulum. Interacts with ERG25, ERG26 and ERG27. Also interacts with ERG1, ERG3, ERG5, ERG6 and ERG11.

The protein localises to the endoplasmic reticulum membrane. Part of the third module of ergosterol biosynthesis pathway that includes the late steps of the pathway. ERG28 has a role as a scaffold to help anchor the catalytic components of the C-4 demethylation complex ERG25, ERG26 and ERG27 to the endoplasmic reticulum. The third module or late pathway involves the ergosterol synthesis itself through consecutive reactions that mainly occur in the endoplasmic reticulum (ER) membrane. Firstly, the squalene synthase ERG9 catalyzes the condensation of 2 farnesyl pyrophosphate moieties to form squalene, which is the precursor of all steroids. Squalene synthase is crucial for balancing the incorporation of farnesyl diphosphate (FPP) into sterol and nonsterol isoprene synthesis. Secondly, the squalene epoxidase ERG1 catalyzes the stereospecific oxidation of squalene to (S)-2,3-epoxysqualene, which is considered to be a rate-limiting enzyme in steroid biosynthesis. Then, the lanosterol synthase ERG7 catalyzes the cyclization of (S)-2,3 oxidosqualene to lanosterol, a reaction that forms the sterol core. In the next steps, lanosterol is transformed to zymosterol through a complex process involving various demethylation, reduction and desaturation reactions. The lanosterol 14-alpha-demethylase ERG11 (also known as CYP51) catalyzes C14-demethylation of lanosterol to produce 4,4'-dimethyl cholesta-8,14,24-triene-3-beta-ol, which is critical for ergosterol biosynthesis. The C-14 reductase ERG24 reduces the C14=C15 double bond of 4,4-dimethyl-cholesta-8,14,24-trienol to produce 4,4-dimethyl-cholesta-8,24-dienol. 4,4-dimethyl-cholesta-8,24-dienol is substrate of the C-4 demethylation complex ERG25-ERG26-ERG27 in which ERG25 catalyzes the three-step monooxygenation required for the demethylation of 4,4-dimethyl and 4alpha-methylsterols, ERG26 catalyzes the oxidative decarboxylation that results in a reduction of the 3-beta-hydroxy group at the C-3 carbon to an oxo group, and ERG27 is responsible for the reduction of the keto group on the C-3. ERG28 has a role as a scaffold to help anchor ERG25, ERG26 and ERG27 to the endoplasmic reticulum and ERG29 regulates the activity of the iron-containing C4-methylsterol oxidase ERG25. Then, the sterol 24-C-methyltransferase ERG6 catalyzes the methyl transfer from S-adenosyl-methionine to the C-24 of zymosterol to form fecosterol. The C-8 sterol isomerase ERG2 catalyzes the reaction which results in unsaturation at C-7 in the B ring of sterols and thus converts fecosterol to episterol. The sterol-C5-desaturase ERG3 then catalyzes the introduction of a C-5 double bond in the B ring to produce 5-dehydroepisterol. The C-22 sterol desaturase ERG5 further converts 5-dehydroepisterol into ergosta-5,7,22,24(28)-tetraen-3beta-ol by forming the C-22(23) double bond in the sterol side chain. Finally, ergosta-5,7,22,24(28)-tetraen-3beta-ol is substrate of the C-24(28) sterol reductase ERG4 to produce ergosterol. The sequence is that of Ergosterol biosynthetic protein 28 from Candida albicans (strain SC5314 / ATCC MYA-2876) (Yeast).